We begin with the raw amino-acid sequence, 92 residues long: Small ribosomal subunit protein uS19c (92 aa).

It belongs to the universal ribosomal protein uS19 family.

It localises to the plastid. Its subcellular location is the chloroplast. Its function is as follows. Protein S19 forms a complex with S13 that binds strongly to the 16S ribosomal RNA. The polypeptide is Small ribosomal subunit protein uS19c (Eucalyptus globulus subsp. globulus (Tasmanian blue gum)).